Reading from the N-terminus, the 178-residue chain is Transcription antitermination protein NusB (178 aa).

Belongs to the NusB family.

In terms of biological role, involved in transcription antitermination. Required for transcription of ribosomal RNA (rRNA) genes. Binds specifically to the boxA antiterminator sequence of the ribosomal RNA (rrn) operons. This is Transcription antitermination protein NusB from Alkalilimnicola ehrlichii (strain ATCC BAA-1101 / DSM 17681 / MLHE-1).